A 291-amino-acid polypeptide reads, in one-letter code: tRNA U34 carboxymethyltransferase (291 aa).

Residues Lys61, Trp75, Lys80, Gly100, 122–124, 149–150, Tyr169, and Arg284 contribute to the carboxy-S-adenosyl-L-methionine site; these read DPS and VE.

It belongs to the class I-like SAM-binding methyltransferase superfamily. CmoB family. In terms of assembly, homotetramer.

It catalyses the reaction carboxy-S-adenosyl-L-methionine + 5-hydroxyuridine(34) in tRNA = 5-carboxymethoxyuridine(34) in tRNA + S-adenosyl-L-homocysteine + H(+). Its function is as follows. Catalyzes carboxymethyl transfer from carboxy-S-adenosyl-L-methionine (Cx-SAM) to 5-hydroxyuridine (ho5U) to form 5-carboxymethoxyuridine (cmo5U) at position 34 in tRNAs. The polypeptide is tRNA U34 carboxymethyltransferase (Campylobacter jejuni subsp. jejuni serotype O:6 (strain 81116 / NCTC 11828)).